Consider the following 1155-residue polypeptide: MHC class II transactivator (1155 aa).

Positions 171–210 are required for acetyltransferase activity; it reads AYANIAELDQYVFQDTQLEGLSKDLFIEHIGAEEGFGENI. Disordered stretches follow at residues 217 to 237 and 297 to 357; these read GQKP…KHRK and SLSI…IKLP. Over residues 224–233 the composition is skewed to basic and acidic residues; that stretch reads RFPEEHAMDS. The 311-residue stretch at 439 to 749 folds into the NACHT domain; the sequence is QVVAVLGKAG…CFLGAVWLAQ (311 aa). 445–452 is a GTP binding site; the sequence is GKAGQGKS. 4 LRR repeats span residues 1010–1033, 1041–1062, 1070–1091, and 1098–1119; these read SLQH…SKLS, ALET…KLAE, SLLR…SLAQ, and SLRV…QLAS.

In terms of assembly, interacts with ZXDA and ZXDC. Interacts with PML (isoform PML-2). Interacts with TAF7; interaction inhibits CIITA acetyltransferase activity, thereby repressing transcription. In terms of processing, autophosphorylated, affecting interaction with TAF7. Expressed at very high levels in dendritic cells, at very low levels in spleen and thymus and is not detected in other tissues. In terms of tissue distribution, detected at high levels in spleen and tonsil as well as in a number of B-lymphocyte cell lines, and at very low levels in dendritic cells.

It is found in the nucleus. Its subcellular location is the PML body. The catalysed reaction is L-seryl-[protein] + ATP = O-phospho-L-seryl-[protein] + ADP + H(+). It carries out the reaction L-threonyl-[protein] + ATP = O-phospho-L-threonyl-[protein] + ADP + H(+). Functionally, essential for transcriptional activity of the HLA class II promoter; activation is via the proximal promoter. Does not bind DNA. May act in a coactivator-like fashion through protein-protein interactions by contacting factors binding to the proximal MHC class II promoter, to elements of the transcription machinery, or both. Alternatively it may activate HLA class II transcription by modifying proteins that bind to the MHC class II promoter. Also mediates enhanced MHC class I transcription, the promoter element requirements for CIITA-mediated transcription are distinct from those of constitutive MHC class I transcription, and CIITA can functionally replace TAF1 at these genes. Activates CD74 transcription. Exhibits intrinsic GTP-stimulated acetyltransferase activity. Exhibits serine/threonine protein kinase activity: phosphorylates the TFIID component TAF7, the RAP74 subunit of the general transcription factor TFIIF, histone H2B at 'Ser-37' and other histones. The chain is MHC class II transactivator from Mus musculus (Mouse).